The primary structure comprises 216 residues: Pyridoxine/pyridoxamine 5'-phosphate oxidase (216 aa).

FMN-binding positions include 63–68, 78–79, Lys85, and Gln107; these read RMVLMK and YS. A substrate-binding site is contributed by Lys68. Residues Tyr125 and Arg129 each coordinate substrate. Residues 142 to 143 and Trp187 each bind FMN; that span reads QS. Residue 193–195 participates in substrate binding; the sequence is RLH. Arg197 lines the FMN pocket.

The protein belongs to the pyridoxamine 5'-phosphate oxidase family. As to quaternary structure, homodimer. FMN is required as a cofactor.

The enzyme catalyses pyridoxamine 5'-phosphate + O2 + H2O = pyridoxal 5'-phosphate + H2O2 + NH4(+). It catalyses the reaction pyridoxine 5'-phosphate + O2 = pyridoxal 5'-phosphate + H2O2. The protein operates within cofactor metabolism; pyridoxal 5'-phosphate salvage; pyridoxal 5'-phosphate from pyridoxamine 5'-phosphate: step 1/1. Its pathway is cofactor metabolism; pyridoxal 5'-phosphate salvage; pyridoxal 5'-phosphate from pyridoxine 5'-phosphate: step 1/1. In terms of biological role, catalyzes the oxidation of either pyridoxine 5'-phosphate (PNP) or pyridoxamine 5'-phosphate (PMP) into pyridoxal 5'-phosphate (PLP). The polypeptide is Pyridoxine/pyridoxamine 5'-phosphate oxidase (Bradyrhizobium sp. (strain BTAi1 / ATCC BAA-1182)).